The sequence spans 340 residues: Probable complex I intermediate-associated protein 30, mitochondrial (340 aa).

The protein belongs to the CIA30 family.

The protein resides in the mitochondrion. In terms of biological role, chaperone protein involved in the assembly of the mitochondrial NADH:ubiquinone oxidoreductase complex (complex I). Required for normal growth and reproduction. This Caenorhabditis elegans protein is Probable complex I intermediate-associated protein 30, mitochondrial (nuaf-1).